The following is a 406-amino-acid chain: Succinylornithine transaminase (406 aa).

Position 252 is an N6-(pyridoxal phosphate)lysine (Lys252).

Belongs to the class-III pyridoxal-phosphate-dependent aminotransferase family. AstC subfamily. Pyridoxal 5'-phosphate is required as a cofactor.

It carries out the reaction N(2)-succinyl-L-ornithine + 2-oxoglutarate = N-succinyl-L-glutamate 5-semialdehyde + L-glutamate. The protein operates within amino-acid degradation; L-arginine degradation via AST pathway; L-glutamate and succinate from L-arginine: step 3/5. In terms of biological role, catalyzes the transamination of N(2)-succinylornithine and alpha-ketoglutarate into N(2)-succinylglutamate semialdehyde and glutamate. Can also act as an acetylornithine aminotransferase. This Escherichia coli O157:H7 protein is Succinylornithine transaminase.